Reading from the N-terminus, the 182-residue chain is Hypoxanthine/guanine phosphoribosyltransferase (182 aa).

This sequence belongs to the purine/pyrimidine phosphoribosyltransferase family. Archaeal HPRT subfamily. Homodimer.

Its subcellular location is the cytoplasm. It catalyses the reaction IMP + diphosphate = hypoxanthine + 5-phospho-alpha-D-ribose 1-diphosphate. The enzyme catalyses GMP + diphosphate = guanine + 5-phospho-alpha-D-ribose 1-diphosphate. It functions in the pathway purine metabolism; IMP biosynthesis via salvage pathway; IMP from hypoxanthine: step 1/1. Catalyzes a salvage reaction resulting in the formation of IMP that is energically less costly than de novo synthesis. This chain is Hypoxanthine/guanine phosphoribosyltransferase, found in Methanosphaerula palustris (strain ATCC BAA-1556 / DSM 19958 / E1-9c).